A 177-amino-acid polypeptide reads, in one-letter code: Inner membrane-spanning protein YciB (177 aa).

A run of 5 helical transmembrane segments spans residues 22 to 42 (IFIA…IHWI), 50 to 70 (ISLF…FFHN), 76 to 96 (WKIT…QFFT), 121 to 141 (FIWS…AYYF), and 149 to 169 (FKVF…SIYI).

It belongs to the YciB family.

It localises to the cell inner membrane. Functionally, plays a role in cell envelope biogenesis, maintenance of cell envelope integrity and membrane homeostasis. This Buchnera aphidicola subsp. Acyrthosiphon pisum (strain 5A) protein is Inner membrane-spanning protein YciB.